The chain runs to 692 residues: PTS system glucoside-specific EIICBA component (692 aa).

The 425-residue stretch at 6-430 (KKFFGQLQRI…LNLKTPGRED (425 aa)) folds into the PTS EIIC type-1 domain. 10 helical membrane-spanning segments follow: residues 15–35 (IGKA…LLTF), 84–104 (LGLA…YLIM), 140–160 (LVLG…IGAL), 185–205 (FVPI…SFVW), 215–235 (LSNF…GIIE), 287–307 (AFTT…AFAI), 318–338 (VVGG…ITEP), 344–364 (LFVA…SFLI), 370–390 (VQIG…GLLS), and 398–418 (LVIP…TFLI). A PTS EIIB type-1 domain is found at 441-522 (SELPFEVLEA…QQIMDGKITS (82 aa)). Cys-463 (phosphocysteine intermediate; for EIIB activity) is an active-site residue. The PTS EIIA type-1 domain maps to 563-667 (DKVFSAKMMG…DTITPIIITN (105 aa)). His-615 acts as the Tele-phosphohistidine intermediate; for EIIA activity in catalysis.

It localises to the cell membrane. Its activity is regulated as follows. Inhibited by methyl alpha-D-glucoside, methyl beta-D-glucoside, p-nitrophenyl alpha-D-glucoside, o-nitrophenyl beta-D-glucoside and salicin, but not by 2-deoxyglucose. The phosphoenolpyruvate-dependent sugar phosphotransferase system (sugar PTS), a major carbohydrate active -transport system, catalyzes the phosphorylation of incoming sugar substrates concomitantly with their translocation across the cell membrane. This system is involved in alpha- and beta-glucoside transport. Can also transport glucose, but not galactose, fructose, mannose, cellobiose, sucrose, maltose, lactose, melibiose and trehalose, as well as N-acetylglucosamine. This chain is PTS system glucoside-specific EIICBA component (glcB), found in Staphylococcus carnosus (strain TM300).